A 344-amino-acid chain; its full sequence is Ferrochelatase (344 aa).

His190 and Glu270 together coordinate Fe cation.

The protein belongs to the ferrochelatase family.

It is found in the cytoplasm. The catalysed reaction is heme b + 2 H(+) = protoporphyrin IX + Fe(2+). It functions in the pathway porphyrin-containing compound metabolism; protoheme biosynthesis; protoheme from protoporphyrin-IX: step 1/1. Functionally, catalyzes the ferrous insertion into protoporphyrin IX. The polypeptide is Ferrochelatase (Rickettsia felis (strain ATCC VR-1525 / URRWXCal2) (Rickettsia azadi)).